A 234-amino-acid chain; its full sequence is Zinc finger BED domain-containing protein 3 (234 aa).

The segment at 19-42 (AAARGGQCPGLGPAPTPTPPGRLG) is disordered. The BED-type zinc finger occupies 43-104 (APYSEAWGYF…SAHRRELESS (62 aa)). C69, C72, H92, and H97 together coordinate Zn(2+). Disordered stretches follow at residues 94–126 (RSAHRRELESSGAGSSPPAAPCPPPPGPAAAPE) and 202–225 (REGALGWAPAAPPPLKDDPEGDRD). Pro residues predominate over residues 111–122 (PAAPCPPPPGPA). Positions 216–225 (LKDDPEGDRD) are enriched in basic and acidic residues.

In terms of assembly, associates with the subcortical maternal complex (SCMC) composed of at least NLRP5, KHDC3L, OOEP, and TLE6 via interaction with NLRP5 and TLE6. Interacts with AXIN1; the interaction is direct, enhanced by protein kinase GSK3B and casein kinase CSNK1E activities and decreases GSK3B-induced beta-catenin serine and threonine phosphorylations. In terms of tissue distribution, secreted in blood plasma, and expressed in skeletal muscle and adipose tissue (at protein level).

It is found in the cytoplasm. Its subcellular location is the membrane. It localises to the secreted. Functionally, acts as a positive regulator in the activation of the canonical Wnt/beta-catenin signaling pathway by stabilizing cytoplasmic beta-catenin. Involved in transcription activation of Wnt target gene expression. Plays a role in symmetric division of blastomeres in the early stages of embryogenesis via regulation of mitotic spindle central positioning and organization of the F-actin filament network. Plays a role in regulating the distribution of cellular organelles, via modulation of cytoskeletal dynamics and cytoplasmic lattice formation. The protein is Zinc finger BED domain-containing protein 3 (ZBED3) of Homo sapiens (Human).